The sequence spans 164 residues: Large ribosomal subunit protein uL10 (164 aa).

Belongs to the universal ribosomal protein uL10 family. In terms of assembly, part of the ribosomal stalk of the 50S ribosomal subunit. The N-terminus interacts with L11 and the large rRNA to form the base of the stalk. The C-terminus forms an elongated spine to which L12 dimers bind in a sequential fashion forming a multimeric L10(L12)X complex.

Its function is as follows. Forms part of the ribosomal stalk, playing a central role in the interaction of the ribosome with GTP-bound translation factors. This chain is Large ribosomal subunit protein uL10, found in Photobacterium profundum (strain SS9).